The sequence spans 307 residues: MTVAKKHWFQIAFQLRGSVIGAIYKRVICCALFGVLVTLLYQLKIPVSQPILGSVIPSIVLGLLLVFRTNTAYDRFWEGRKAWGSIVNNTRNLARQIWVSVEEVSLKDREAKISVLNLLVAFAVATKLHLRGEPINSELEDLISTSRYFKLKSMNNPPLEVAFWIGDYLQQQYTCKCLNSYQLTSIQELLNNLVDNLGSCERILRTPMPLAYSIHLKQLLLLYCFLLPFQMVESLGWWTGLVVGLVSFTLFGIEAIGLEIENPFGYDPNDLPLDAICNTMKRNIDDLTSLSPNVRSHDLGETSNVTI.

The next 4 membrane-spanning stretches (helical) occupy residues 19 to 39, 47 to 67, 209 to 229, and 238 to 258; these read VIGA…LVTL, VSQP…LLVF, PLAY…LLPF, and WTGL…AIGL.

This sequence belongs to the anion channel-forming bestrophin (TC 1.A.46) family.

It localises to the cell membrane. The polypeptide is Voltage-dependent anion channel-forming protein alr2987 (Nostoc sp. (strain PCC 7120 / SAG 25.82 / UTEX 2576)).